The chain runs to 722 residues: MLDLTPQSKKISIQIGGMTCQSCANRIEKVLNKKPFVQQAGVNFAAEEAQVVFDATQASEAQIIEIIHKTGFSAHIKQANELPIEENTSIPWRLIVLWIINIPFLIGMLGMIGGSHNLMLPPIWQFALASIVQLWLAIPFYRGAIGSIRGGLTNMDVLVSTGTLTIYLYSAFMLFYHANHAMGHVYFEASVMVIGFVSLGKFLEDRTKKHSLNSLSMLLQLTPKKVTVLRNEKWIEIALDQVNIGEIIRANQGERIAADGVIESGNGWCDESHLTGESRPEEKQKGGKVLAGAMVTEGSIIYRANQLGSQTLLGDMMNALSDAQGSKAPIARFADKVTSVFVPVVLVISLVTFALTYILTNDSVSSLIHAVSVLVIACPCALGLATPAAIMVGLGKAVNAGVWFKDAAAMEETAHVDTVVLDKTGTLTKGELEISALWQPQSAVYSEDDLYRFAAAVERQANHPIAKAIVQAAEXKMLEIPTALFSKMEVGQGIQAELEQVGTIKVGKPDYCGLILPKNLEDIWQIASIVAVSINDEPIGAFALTDTLKNDSLHAIQRLQQQNIDVVIMSGDQQSVVDYIAKQLGIKKAFGKLTPRDKAEQIQKLKDLGHIVAMVGDGINDAPALASANVSFAMKSSSDIAEQTASATLMQHSVNQLVDALFIARATLKNIKQNLFFALIYNILGIPLAAFGFLSPIIAGAAMALSSISVLMNALRLKKVRF.

Residues K9 to H75 form the HMA domain. A metal cation is bound by residues C20 and C23. Helical transmembrane passes span L94–G114, L118–I138, V157–H177, H180–G200, V340–T360, and V373–G393. D422 functions as the 4-aspartylphosphate intermediate in the catalytic mechanism. 4 helical membrane-spanning segments follow: residues I523–A543, L608–A628, L675–S695, and I697–L717. D617 and D621 together coordinate Mg(2+).

This sequence belongs to the cation transport ATPase (P-type) (TC 3.A.3) family. Type IB subfamily.

The protein localises to the cell membrane. The enzyme catalyses ATP + H2O = ADP + phosphate + H(+). This is Probable cation-transporting ATPase HI_0290 from Haemophilus influenzae (strain ATCC 51907 / DSM 11121 / KW20 / Rd).